We begin with the raw amino-acid sequence, 264 residues long: 4-oxalocrotonate decarboxylase (264 aa).

Belongs to the hydratase/decarboxylase family.

The catalysed reaction is (3E)-2-oxohex-3-enedioate + H(+) = 2-oxopent-4-enoate + CO2. It participates in aromatic compound metabolism; benzoate degradation via hydroxylation. This Pseudomonas sp. (strain CF600) protein is 4-oxalocrotonate decarboxylase (dmpH).